The following is an 86-amino-acid chain: Tryptophan-containing weak neurotoxin (86 aa).

The N-terminal stretch at Met1–Thr21 is a signal peptide. 5 disulfide bridges follow: Cys24/Cys45, Cys27/Cys32, Cys38/Cys63, Cys67/Cys78, and Cys79/Cys84.

This sequence belongs to the three-finger toxin family. Ancestral subfamily. Orphan group II sub-subfamily. Monomer in solution. In terms of processing, the disulfide bond Cys-27-Cys-32 is probably not needed for efficient interaction of the toxin with the target receptor (Torpedo muscle or alpha-7/CHRNA7 nAChR). In terms of tissue distribution, expressed by the venom gland.

The protein localises to the secreted. In terms of biological role, neurotoxin that irreversibly inhibits nicotinic acetylcholine receptors (nAChR) and allosterically interacts with muscarinic acetylcholine receptors (mAChR). The loop II is involved in the interaction of this toxin with nAChR and mAChR. On nAChR, it acts as a competitive antagonist (muscle-type and alpha-7/CHRNA7) with IC(50) values in the micromolar range. On mAChR, in presence of ACh, it partially inhibits the effect of acetylcholine (ACh) (allosteric antagonist), whereas in the absence of ACh, it activates the receptor (allosteric agonist). It also shows a very weak inhibition of GABA(A) receptor composed of alpha-1-beta-3-gamma-2 (GABRA1 and GABRB3 and GABRG2) subunits (10 uM inhibit 31% current). In vivo, is nonlethal to mice at concentrations up to 20 mg/kg, but exerts a myorelaxant effect, induces a dose-dependent decrease in blood pressure and an increase in heart rate in mice and rats. This is Tryptophan-containing weak neurotoxin from Naja kaouthia (Monocled cobra).